We begin with the raw amino-acid sequence, 632 residues long: Golgin subfamily A member 8J (632 aa).

The tract at residues 1–76 (MAEETQHNKL…TSSATLKDLE (76 aa)) is disordered. Coiled-coil stretches lie at residues 86-154 (LDSR…HMKR) and 220-421 (LKVQ…SLMA). 2 stretches are compositionally biased toward basic and acidic residues: residues 352 to 362 (KQEERIQEQHK) and 427 to 440 (HGGE…EEAP). Disordered stretches follow at residues 352-377 (KQEE…FKEP), 423-452 (PGEG…DPES), and 496-524 (LSEP…DEGE). A compositionally biased stretch (gly residues) spans 508–520 (LGGGHHQAGAQGG).

Belongs to the GOLGA8 family.

The protein is Golgin subfamily A member 8J (GOLGA8J) of Homo sapiens (Human).